We begin with the raw amino-acid sequence, 207 residues long: Protein YABBY 6 (207 aa).

The segment at 16–43 (CNFCNTILAVSVPGNSMLNIVTVRCGHC) adopts a C4-type zinc-finger fold.

This sequence belongs to the YABBY family. Expressed in leaf blades, leaf sheaths and flowers.

Its subcellular location is the nucleus. The protein is Protein YABBY 6 (YAB6) of Oryza sativa subsp. japonica (Rice).